The chain runs to 420 residues: Tyrosine--tRNA ligase (420 aa).

Residue Y38 participates in L-tyrosine binding. A 'HIGH' region motif is present at residues 43 to 52; it reads PTGDSLHIGH. Residues Y169 and Q173 each coordinate L-tyrosine. The 'KMSKS' region motif lies at 231–235; it reads KFGKS. An ATP-binding site is contributed by K234. In terms of domain architecture, S4 RNA-binding spans 353–419; sequence KNLVDFLVDT…GKRKYTLVTI (67 aa).

The protein belongs to the class-I aminoacyl-tRNA synthetase family. TyrS type 1 subfamily. As to quaternary structure, homodimer.

The protein localises to the cytoplasm. The catalysed reaction is tRNA(Tyr) + L-tyrosine + ATP = L-tyrosyl-tRNA(Tyr) + AMP + diphosphate + H(+). Its function is as follows. Catalyzes the attachment of tyrosine to tRNA(Tyr) in a two-step reaction: tyrosine is first activated by ATP to form Tyr-AMP and then transferred to the acceptor end of tRNA(Tyr). The sequence is that of Tyrosine--tRNA ligase from Lactobacillus helveticus (strain DPC 4571).